A 348-amino-acid polypeptide reads, in one-letter code: Beta-hexosaminidase (348 aa).

Substrate-binding positions include D64, R72, R138, and K168–H169. Residue H181 is the Proton donor/acceptor of the active site. D252 (nucleophile) is an active-site residue.

The protein belongs to the glycosyl hydrolase 3 family. NagZ subfamily.

It is found in the cytoplasm. The enzyme catalyses Hydrolysis of terminal non-reducing N-acetyl-D-hexosamine residues in N-acetyl-beta-D-hexosaminides.. It participates in cell wall biogenesis; peptidoglycan recycling. Plays a role in peptidoglycan recycling by cleaving the terminal beta-1,4-linked N-acetylglucosamine (GlcNAc) from peptide-linked peptidoglycan fragments, giving rise to free GlcNAc, anhydro-N-acetylmuramic acid and anhydro-N-acetylmuramic acid-linked peptides. This chain is Beta-hexosaminidase, found in Nitrosomonas eutropha (strain DSM 101675 / C91 / Nm57).